We begin with the raw amino-acid sequence, 223 residues long: Phosphoribosylformylglycinamidine synthase subunit PurQ (223 aa).

The Glutamine amidotransferase type-1 domain maps to 2–223 (KFAVIQFPGS…ASVLKNFVGK (222 aa)). Cys-86 (nucleophile) is an active-site residue. Residues His-195 and Glu-197 contribute to the active site.

As to quaternary structure, part of the FGAM synthase complex composed of 1 PurL, 1 PurQ and 2 PurS subunits.

It localises to the cytoplasm. It catalyses the reaction N(2)-formyl-N(1)-(5-phospho-beta-D-ribosyl)glycinamide + L-glutamine + ATP + H2O = 2-formamido-N(1)-(5-O-phospho-beta-D-ribosyl)acetamidine + L-glutamate + ADP + phosphate + H(+). It carries out the reaction L-glutamine + H2O = L-glutamate + NH4(+). It functions in the pathway purine metabolism; IMP biosynthesis via de novo pathway; 5-amino-1-(5-phospho-D-ribosyl)imidazole from N(2)-formyl-N(1)-(5-phospho-D-ribosyl)glycinamide: step 1/2. Functionally, part of the phosphoribosylformylglycinamidine synthase complex involved in the purines biosynthetic pathway. Catalyzes the ATP-dependent conversion of formylglycinamide ribonucleotide (FGAR) and glutamine to yield formylglycinamidine ribonucleotide (FGAM) and glutamate. The FGAM synthase complex is composed of three subunits. PurQ produces an ammonia molecule by converting glutamine to glutamate. PurL transfers the ammonia molecule to FGAR to form FGAM in an ATP-dependent manner. PurS interacts with PurQ and PurL and is thought to assist in the transfer of the ammonia molecule from PurQ to PurL. The chain is Phosphoribosylformylglycinamidine synthase subunit PurQ from Lactococcus lactis subsp. lactis (strain IL1403) (Streptococcus lactis).